The following is a 701-amino-acid chain: Epithelial splicing regulatory protein 2 (701 aa).

3 consecutive RRM domains span residues 226–303 (TVIR…KATG), 327–407 (VIIR…RSTA), and 448–523 (CVRL…VEVF).

This sequence belongs to the ESRP family.

It localises to the nucleus. MRNA splicing factor that regulates the formation of epithelial cell-specific isoforms. Specifically regulates the expression of FGFR2-IIIb, an epithelial cell-specific isoform of FGFR2. Acts by directly binding specific sequences in mRNAs. Binds the GU-rich sequence motifs in the ISE/ISS-3, a cis-element regulatory region present in the mRNA of FGFR2. The polypeptide is Epithelial splicing regulatory protein 2 (ESRP2) (Gallus gallus (Chicken)).